The chain runs to 152 residues: MVKAVAVLSSSEGVSGTIFFTQAADGPTTVTGEISGLKPGHHGFHVHALGDTTNGCMSTGPHFNPAGKEHGAPEDDIRHAGDLGNVNVGDDGKVSFSIIDSQIPLTGPNSIVGRAVVVHADPDDLGKGGHELSKTTGNAGGRVACGVIGLQG.

Cu cation-binding residues include His-45, His-47, and His-62. Cys-56 and Cys-145 are oxidised to a cystine. Zn(2+) contacts are provided by His-62, His-70, His-79, and Asp-82. His-119 is a binding site for Cu cation.

The protein belongs to the Cu-Zn superoxide dismutase family. Homodimer. The cofactor is Cu cation. Zn(2+) is required as a cofactor.

It is found in the cytoplasm. It carries out the reaction 2 superoxide + 2 H(+) = H2O2 + O2. In terms of biological role, destroys radicals which are normally produced within the cells and which are toxic to biological systems. The chain is Superoxide dismutase [Cu-Zn] (SODCC) from Carica papaya (Papaya).